We begin with the raw amino-acid sequence, 305 residues long: Homoserine O-succinyltransferase (305 aa).

C142 serves as the catalytic Acyl-thioester intermediate. The substrate site is built by K163 and S192. Residue H235 is the Proton acceptor of the active site. E237 is a catalytic residue. R249 serves as a coordination point for substrate.

Belongs to the MetA family.

Its subcellular location is the cytoplasm. It catalyses the reaction L-homoserine + succinyl-CoA = O-succinyl-L-homoserine + CoA. Its pathway is amino-acid biosynthesis; L-methionine biosynthesis via de novo pathway; O-succinyl-L-homoserine from L-homoserine: step 1/1. Its function is as follows. Transfers a succinyl group from succinyl-CoA to L-homoserine, forming succinyl-L-homoserine. The protein is Homoserine O-succinyltransferase of Psychromonas ingrahamii (strain DSM 17664 / CCUG 51855 / 37).